A 1543-amino-acid chain; its full sequence is ABC multidrug transporter AFR1 (1543 aa).

Residues 1-85 (MSAAGVPAEL…DGKQKRLPAD (85 aa)) are disordered. The span at 18 to 41 (TATTQNPSGLANSQVTSGPVSSAT) shows a compositional bias: polar residues. Basic and acidic residues predominate over residues 62–83 (AVEAEKAEAIDAAGDGKQKRLP). N-linked (GlcNAc...) asparagine glycosylation occurs at N117. The tract at residues 119-157 (SQRSQHELHRPTTRHSVRSSFSRKDRVVSRLTQDDAEKA) is disordered. A compositionally biased stretch (basic and acidic residues) spans 140-157 (SRKDRVVSRLTQDDAEKA). N-linked (GlcNAc...) asparagine glycans are attached at residues N208 and N398. In terms of domain architecture, ABC transporter 1 spans 222–474 (IKVLGIFGFN…MIGLGYRDLP (253 aa)). Helical transmembrane passes span 585-605 (FGISTGFATSIIIALIVGSVY), 619-639 (GGLLFLGLLFNALTSFSELPS), 670-690 (VPYNASVIFLFSIVLYFMGGL), 695-715 (GAFFMFFLFVFLTFMVMSAFF), and 727-747 (VAARLASVLISFMVTYTGYMI). Residue N823 is glycosylated (N-linked (GlcNAc...) asparagine). A helical membrane pass occupies residues 845–865 (FGILLGFFTFFMFLQMLFIEV). In terms of domain architecture, ABC transporter 2 spans 918–1160 (FTWEGLSYTV…VLIDYLERNG (243 aa)). ATP is bound at residue 954 to 961 (GASGAGKT). An N-linked (GlcNAc...) asparagine glycan is attached at N1223. Transmembrane regions (helical) follow at residues 1254 to 1274 (WTRLFAHLAIGLIVTLTFLQL), 1285 to 1305 (VFAIFFATVLPALILAQIEPQ), 1336 to 1356 (MPYSLGCAVSFFLLLYYGVGF), 1366 to 1386 (FFLMILVTEVYAVTLGQAVAA), 1391 to 1411 (ILIAALFNPFLLVLFSIFCGV), and 1517 to 1537 (FGIFICYVVFNILVLLIAARF).

It belongs to the ABC transporter superfamily. ABCG family. PDR (TC 3.A.1.205) subfamily.

It localises to the cell membrane. The catalysed reaction is itraconazole(in) + ATP + H2O = itraconazole(out) + ADP + phosphate + H(+). The enzyme catalyses voriconazole(in) + ATP + H2O = voriconazole(out) + ADP + phosphate + H(+). It catalyses the reaction fluconazole(in) + ATP + H2O = fluconazole(out) + ADP + phosphate + H(+). In terms of biological role, major pleiotropic ABC efflux transporter that confers resistance to structurally and functionally unrelated compounds including azoles such as fluconazole (FLC), itraconazole (ITC), posaconazole (POS), and voriconazole (VRC). Is also able to efflux the eukaryote protein synthesis inhibitor cycloheximide (CHX). This is ABC multidrug transporter AFR1 from Cryptococcus neoformans var. grubii serotype A (strain H99 / ATCC 208821 / CBS 10515 / FGSC 9487) (Filobasidiella neoformans var. grubii).